The primary structure comprises 238 residues: Pyridoxine 5'-phosphate synthase (238 aa).

Asn9 lines the 3-amino-2-oxopropyl phosphate pocket. 11 to 12 contacts 1-deoxy-D-xylulose 5-phosphate; that stretch reads DH. Arg20 contributes to the 3-amino-2-oxopropyl phosphate binding site. His45 acts as the Proton acceptor in catalysis. Positions 47 and 52 each coordinate 1-deoxy-D-xylulose 5-phosphate. The active-site Proton acceptor is Glu72. A 1-deoxy-D-xylulose 5-phosphate-binding site is contributed by Thr102. Residue His189 is the Proton donor of the active site. 3-amino-2-oxopropyl phosphate is bound by residues Gly190 and 211 to 212; that span reads GH.

The protein belongs to the PNP synthase family. As to quaternary structure, homooctamer; tetramer of dimers.

Its subcellular location is the cytoplasm. The enzyme catalyses 3-amino-2-oxopropyl phosphate + 1-deoxy-D-xylulose 5-phosphate = pyridoxine 5'-phosphate + phosphate + 2 H2O + H(+). It functions in the pathway cofactor biosynthesis; pyridoxine 5'-phosphate biosynthesis; pyridoxine 5'-phosphate from D-erythrose 4-phosphate: step 5/5. Functionally, catalyzes the complicated ring closure reaction between the two acyclic compounds 1-deoxy-D-xylulose-5-phosphate (DXP) and 3-amino-2-oxopropyl phosphate (1-amino-acetone-3-phosphate or AAP) to form pyridoxine 5'-phosphate (PNP) and inorganic phosphate. The chain is Pyridoxine 5'-phosphate synthase from Ehrlichia canis (strain Jake).